The primary structure comprises 1231 residues: Alpha-protein kinase 1 (1231 aa).

ADP-D-glycero-beta-D-manno-heptose is bound by residues phenylalanine 61, glutamine 67, arginine 116, 150–153, aspartate 231, lysine 233, 236–237, and phenylalanine 295; these read RQAR and ST. Disordered regions lie at residues 508–540, 609–637, 692–739, 767–791, 811–843, and 859–888; these read ERVS…RSWT, GSGQ…SSRA, GSNN…GDVP, TFAP…SPSQ, PDGS…DEEG, and AHRP…PIFD. Residues 509–522 are compositionally biased toward polar residues; sequence RVSSQDSRSTASSK. A compositionally biased stretch (basic and acidic residues) spans 524–537; that stretch reads SKKDQGKLQRERGR. Over residues 700–714 the composition is skewed to low complexity; it reads SSHSCGSDSWSLSSS. A compositionally biased stretch (acidic residues) spans 775-784; sequence PEGETAESTD. In terms of domain architecture, Alpha-type protein kinase spans 1003–1223; sequence KYSKKSELWT…ICHRLSLTRP (221 aa).

This sequence belongs to the protein kinase superfamily. Alpha-type protein kinase family. ALPK subfamily. Widely expressed. Expressed in the retina and in sweat glands, especially in the myoepithelial cells.

Its subcellular location is the cytoplasm. The protein localises to the cytosol. The protein resides in the cytoskeleton. It localises to the spindle pole. It is found in the microtubule organizing center. Its subcellular location is the centrosome. The protein localises to the cell projection. The protein resides in the cilium. It carries out the reaction L-seryl-[protein] + ATP = O-phospho-L-seryl-[protein] + ADP + H(+). The catalysed reaction is L-threonyl-[protein] + ATP = O-phospho-L-threonyl-[protein] + ADP + H(+). With respect to regulation, serine/threonine-protein kinase activity is stimulated upon ADP-D-glycero-beta-D-manno-heptose (ADP-Heptose)-binding. In terms of biological role, serine/threonine-protein kinase that detects bacterial pathogen-associated molecular pattern metabolites (PAMPs) and initiates an innate immune response, a critical step for pathogen elimination and engagement of adaptive immunity. Specifically recognizes and binds ADP-D-glycero-beta-D-manno-heptose (ADP-Heptose), a potent PAMP present in all Gram-negative and some Gram-positive bacteria. ADP-Heptose-binding stimulates its kinase activity to phosphorylate and activate TIFA, triggering pro-inflammatory NF-kappa-B signaling. May be involved in monosodium urate monohydrate (MSU)-induced inflammation by mediating phosphorylation of unconventional myosin MYO9A. May also play a role in apical protein transport by mediating phosphorylation of unconventional myosin MYO1A. May play a role in ciliogenesis. The polypeptide is Alpha-protein kinase 1 (Mus musculus (Mouse)).